The primary structure comprises 460 residues: tRNA modification GTPase MnmE (460 aa).

3 residues coordinate (6S)-5-formyl-5,6,7,8-tetrahydrofolate: Arg-24, Glu-81, and Lys-121. Positions 218 to 385 constitute a TrmE-type G domain; the sequence is GMVVAIAGPP…LIAAIEDFAA (168 aa). Residues 228-233, 247-253, and 272-275 contribute to the GTP site; these read NVGKST, SPHAGTT, and DTAG. Residues Ser-232 and Thr-253 each contribute to the Mg(2+) site. Lys-460 serves as a coordination point for (6S)-5-formyl-5,6,7,8-tetrahydrofolate.

It belongs to the TRAFAC class TrmE-Era-EngA-EngB-Septin-like GTPase superfamily. TrmE GTPase family. In terms of assembly, homodimer. Heterotetramer of two MnmE and two MnmG subunits. It depends on K(+) as a cofactor.

It is found in the cytoplasm. Its function is as follows. Exhibits a very high intrinsic GTPase hydrolysis rate. Involved in the addition of a carboxymethylaminomethyl (cmnm) group at the wobble position (U34) of certain tRNAs, forming tRNA-cmnm(5)s(2)U34. In Rhodopseudomonas palustris (strain BisB5), this protein is tRNA modification GTPase MnmE.